The following is a 351-amino-acid chain: LIM/homeobox protein ceh-14 (351 aa).

2 LIM zinc-binding domains span residues 46–105 (AICS…KFGT) and 105–169 (TKCS…ARDK). Positions 180–239 (NKRPRTTISAKSLETLKQAYQTSSKPARHVREQLASETGLDMRVVQVWFQNRRAKEKRLK) form a DNA-binding region, homeobox. Over residues 238 to 254 (LKKDAGRRWKSSNRAES) the composition is skewed to basic and acidic residues. The disordered stretch occupies residues 238–268 (LKKDAGRRWKSSNRAESDSNSPIESINGQSP). Positions 255 to 268 (DSNSPIESINGQSP) are enriched in polar residues.

In terms of assembly, interacts (via LIM zinc-binding domains 1 and 2) with lim-7 (via LID domain). May interact with itself. May interact with homeobox protein ceh-63. In terms of tissue distribution, expressed in the anterior AFDL/R sensory neurons and BDUL/R and ALA interneurons, and in PVT, PVQL/R, DVC, PVNL/R, PVWL/R, PVR, PHCL/R, PHAL/R and PHBL/R cells in the tail region.

The protein resides in the nucleus. Its function is as follows. Probable transcription factor, modulating expression of helix-loop-helix protein mbr-1 and homeobox protein ceh-63, perhaps acting in concert with ceh-63. Binds to a motif including the sequence 5'-CTAAT-3' in regulatory promoter elements. Confers thermosensory function to neurons. Required for correct AFD-mediated thermotaxis. In concert with homeobox protein ttx-1, perhaps as components in a complex, specifies identity of AFD neurons, acting by synergistically regulating receptor-type guanylyl cyclase gcy-8, gcy-18 and other genes. Involved in postembryonic differentiation of the ALA neuron, and regulation of genes that contribute to behavioral quiescence, a sleep-like behavior mediated by ALA. Regulates its own expression and also that of homeodomain ceh-17, together forming an autoregulatory loop in the ALA neuron. Required for initial pathfinding of the ALA axons, but largely dispensable for axon migration. Involved in regulating postembryonic axon maintenance in the ventral nerve cord, acting in concert with LIM homeobox protein lim-6, via modulation of expression of immunoglobulin domain zig genes in the interneuron PVT. Plays a role in controlling the peptidergic identity of the BDU neurons, regulating expression of flp-10, nlp-1, and nlp-15, thereby modulating the harsh touch response. This Caenorhabditis elegans protein is LIM/homeobox protein ceh-14 (ceh-14).